A 261-amino-acid chain; its full sequence is uncharacterized protein (261 aa).

This is an uncharacterized protein from Bacillus subtilis (strain 168).